Consider the following 417-residue polypeptide: Squalene synthase (417 aa).

2 residues coordinate NADP(+): Arg52 and Arg77. Mg(2+) is bound by residues Asp80, Glu83, and Asp84. Residue Arg218 participates in NADP(+) binding. Residues 284–304 traverse the membrane as a helical segment; it reads SIFNFCAIPQVMAIATLAACY. NADP(+)-binding residues include Lys315 and Arg317. Residues 384–404 form a helical membrane-spanning segment; sequence PIYLSFVMLLAALSWQYLSTL.

The protein belongs to the phytoene/squalene synthase family. It depends on Mg(2+) as a cofactor.

Its subcellular location is the endoplasmic reticulum membrane. The enzyme catalyses 2 (2E,6E)-farnesyl diphosphate + NADPH + H(+) = squalene + 2 diphosphate + NADP(+). The catalysed reaction is 2 (2E,6E)-farnesyl diphosphate + NADH + H(+) = squalene + 2 diphosphate + NAD(+). It catalyses the reaction presqualene diphosphate + NADH + H(+) = squalene + diphosphate + NAD(+). It carries out the reaction presqualene diphosphate + NADPH + H(+) = squalene + diphosphate + NADP(+). The enzyme catalyses 2 (2E,6E)-farnesyl diphosphate = presqualene diphosphate + diphosphate. It functions in the pathway terpene metabolism; lanosterol biosynthesis; lanosterol from farnesyl diphosphate: step 1/3. Catalyzes the condensation of 2 farnesyl pyrophosphate (FPP) moieties to form squalene. Proceeds in two distinct steps. In the first half-reaction, two molecules of FPP react to form the stable presqualene diphosphate intermediate (PSQPP), with concomitant release of a proton and a molecule of inorganic diphosphate. In the second half-reaction, PSQPP undergoes heterolysis, isomerization, and reduction with NADPH or NADH to form squalene. It is the first committed enzyme of the sterol biosynthesis pathway. This is Squalene synthase (FDFT1) from Bos taurus (Bovine).